Here is a 149-residue protein sequence, read N- to C-terminus: MADQLTDDQISEFKEAFSLFDKDGDGCITTKELGTVMRSLGQNPTEAELQDMINEVDADGNGTIDFPEFLNLMARKMKDTDSEEELKEAFRVFDKDQNGFISAAELRHVMTNLGEKLTDEEVDEMIREADVDGDGQINYEEFVKVMMAK.

Alanine 2 bears the N-acetylalanine mark. 4 EF-hand domains span residues 8–43 (DQISEFKEAFSLFDKDGDGCITTKELGTVMRSLGQN), 44–79 (PTEAELQDMINEVDADGNGTIDFPEFLNLMARKMKD), 81–116 (DSEEELKEAFRVFDKDQNGFISAAELRHVMTNLGEK), and 117–149 (LTDEEVDEMIREADVDGDGQINYEEFVKVMMAK). Residues aspartate 21, aspartate 23, aspartate 25, cysteine 27, glutamate 32, aspartate 57, aspartate 59, asparagine 61, threonine 63, glutamate 68, aspartate 94, aspartate 96, asparagine 98, and glutamate 105 each coordinate Ca(2+). Position 116 is an N6,N6,N6-trimethyllysine (lysine 116). Ca(2+)-binding residues include aspartate 130, aspartate 132, aspartate 134, glutamine 136, and glutamate 141.

The protein belongs to the calmodulin family.

Functionally, calmodulin mediates the control of a large number of enzymes, ion channels and other proteins by Ca(2+). Among the enzymes to be stimulated by the calmodulin-Ca(2+) complex are a number of protein kinases and phosphatases. This is Calmodulin-1 (CAM81) from Petunia hybrida (Petunia).